Here is a 623-residue protein sequence, read N- to C-terminus: Ciliated left-right organizer metallopeptidase (623 aa).

The signal sequence occupies residues 1–20; the sequence is MSFLLCIGILLLPWFPCVCG. At 21-578 the chain is on the extracellular side; sequence KCIFDQIQRS…LFLVSEAKIS (558 aa). H249 serves as a coordination point for Zn(2+). E250 is an active-site residue. Positions 253 and 326 each coordinate Zn(2+). The chain crosses the membrane as a helical span at residues 579-599; that stretch reads LAAVLSLMAVFALLSAAVLLY. The Cytoplasmic segment spans residues 600–623; it reads RKNLSVRVHAASYRTPLPHILYRN.

It belongs to the peptidase M8 family. It depends on Zn(2+) as a cofactor. Expressed specifically in dorsal forerunner cells (DFCs) that form a ciliated Kupffer's vesicle later.

Its subcellular location is the membrane. Plays an essential role for patterning the left-right axis. Requires solely on the left side, downstream of the leftward flow, but upstream of dand5, a nodal inhibitor involved in left-right patterning. The chain is Ciliated left-right organizer metallopeptidase (cirop) from Danio rerio (Zebrafish).